The chain runs to 478 residues: PTS system mannitol-specific EIICB component (478 aa).

Over 1–29 (MQQQEQQQGGMKVKVQRFGSYLSGMIMPN) the chain is Cytoplasmic. Residues 18 to 347 (FGSYLSGMIM…VILKSSKASE (330 aa)) form the PTS EIIC type-2 domain. Residues 30 to 51 (IGAFIAWGIITALFIPAGWFPN) form a helical membrane-spanning segment. Over 52-55 (EQLN) the chain is Extracellular. Residues 56–76 (TLVSPMITYLLPLLIAYTGGK) traverse the membrane as a helical segment. The Cytoplasmic portion of the chain corresponds to 77-139 (MIYDHRGGVV…QGFEMLINNF (63 aa)). A helical transmembrane segment spans residues 140-161 (TAGIVGAALTILAFYAIGPVVL). The Extracellular portion of the chain corresponds to 162–170 (TLNKLLAAG). The chain crosses the membrane as a helical span at residues 171 to 191 (VEVIVHANLLPVASVFVEPAK). Residues 192-278 (VLFLNNAINH…ILMKPALILA (87 aa)) are Cytoplasmic-facing. The chain crosses the membrane as a helical span at residues 279–298 (AIAGGASGLLTFTIFNAGLV). Over 299 to 318 (AAASPGSIIALMAMTPRGGY) the chain is Extracellular. The helical transmembrane segment at 319–340 (FGVLAGVLVAAAVSFIVSAVIL) threads the bilayer. Residues 341–478 (KSSKASEEDL…YDELIEKLKK (138 aa)) are Cytoplasmic-facing. A PTS EIIB type-2 domain is found at 390–478 (NKIIFACDAG…YDELIEKLKK (89 aa)). The active-site Phosphocysteine intermediate; for EIIB activity is the cysteine 396. Cysteine 396 bears the Phosphocysteine; by EIIA mark.

Homodimer.

Its subcellular location is the cell membrane. It catalyses the reaction D-mannitol(out) + N(pros)-phospho-L-histidyl-[protein] = D-mannitol 1-phosphate(in) + L-histidyl-[protein]. Functionally, the phosphoenolpyruvate-dependent sugar phosphotransferase system (sugar PTS), a major carbohydrate active transport system, catalyzes the phosphorylation of incoming sugar substrates concomitantly with their translocation across the cell membrane. The enzyme II CmtAB PTS system is involved in D-mannitol transport. In Bacillus subtilis (strain 168), this protein is PTS system mannitol-specific EIICB component.